Consider the following 428-residue polypeptide: MYQSPRRLCSALLLRDAPGLRRTLVPGPRRTLAPPVLGSRPASPQLQAAASGAARSRPRTVSPMGNGTSRLYSALAKTINSSAAAQHPEYLVSADPEHLEPIDPKELLEECRAVLHTRPPRYQRDFVDLRTDCSSSHPPIRVMQWNILAQALGEGKDNFVQCPVEALKWEERKCLILEEILAYQPDILCLQEVDHYFDTFQPLLSRLGYQGTFFPKPWSPCLDVEHNNGPDGCALFFLQSRFKLINSTNIRLTAMTLKTNQVAIAQTLECKESGRQFCIAVTHLKARTGWERFRSAQGCDLLQNLQNITEGAKIPLIVCGDFNAEPTEEVYKHFASSSLNLNSAYKLLSPDGQSEPPYTTWKIRTSGECRHTLDYIWYSRHALSVTSALDLLTEEQIGPNRLPSFHYPSDHLSLVCDFSFNEEPDELL.

The N-terminal 72 residues, 1–72 (MYQSPRRLCS…PMGNGTSRLY (72 aa)), are a transit peptide targeting the mitochondrion. Residues 21 to 66 (RRTLVPGPRRTLAPPVLGSRPASPQLQAAASGAARSRPRTVSPMGN) form a disordered region. Residues 39–55 (SRPASPQLQAAASGAAR) show a composition bias toward low complexity. Residue Glu-192 coordinates Mg(2+). Substrate is bound by residues Glu-192, 216–218 (KPW), Asn-260, 283–286 (HLKA), and 321–323 (DFN). An interaction with PPARG region spans residues 340–350 (NLNSAYKLLSP). His-411 provides a ligand contact to substrate.

This sequence belongs to the CCR4/nocturin family. As to quaternary structure, interacts with PPARG. The cofactor is Mg(2+).

The protein localises to the cytoplasm. Its subcellular location is the nucleus. It localises to the perinuclear region. It is found in the mitochondrion. It carries out the reaction NADP(+) + H2O = phosphate + NAD(+). The enzyme catalyses NADPH + H2O = phosphate + NADH. Phosphatase which catalyzes the conversion of NADP(+) to NAD(+) and of NADPH to NADH. Shows a small preference for NADPH over NADP(+). Represses translation and promotes degradation of target mRNA molecules. Plays an important role in post-transcriptional regulation of metabolic genes under circadian control. Exerts a rhythmic post-transcriptional control of genes necessary for metabolic functions including nutrient absorption, glucose/insulin sensitivity, lipid metabolism, adipogenesis, inflammation and osteogenesis. Plays an important role in favoring adipogenesis over osteoblastogenesis and acts as a key regulator of the adipogenesis/osteogenesis balance. Promotes adipogenesis by facilitating PPARG nuclear translocation which activates its transcriptional activity. Regulates circadian expression of NOS2 in the liver and negatively regulates the circadian expression of IGF1 in the bone. Critical for proper development of early embryos. The protein is Nocturnin of Rattus norvegicus (Rat).